Reading from the N-terminus, the 140-residue chain is ATP synthase epsilon chain (140 aa).

The protein belongs to the ATPase epsilon chain family. In terms of assembly, F-type ATPases have 2 components, CF(1) - the catalytic core - and CF(0) - the membrane proton channel. CF(1) has five subunits: alpha(3), beta(3), gamma(1), delta(1), epsilon(1). CF(0) has three main subunits: a, b and c.

It localises to the cell inner membrane. Produces ATP from ADP in the presence of a proton gradient across the membrane. The protein is ATP synthase epsilon chain of Xanthomonas campestris pv. campestris (strain 8004).